We begin with the raw amino-acid sequence, 656 residues long: DNA ligase (656 aa).

NAD(+)-binding positions include 32 to 36 and 81 to 82; these read DAVYD and SL. Lys-112 serves as the catalytic N6-AMP-lysine intermediate. Residues Arg-133, Glu-167, and Lys-306 each contribute to the NAD(+) site. Residues Cys-400, Cys-403, Cys-416, and Cys-421 each contribute to the Zn(2+) site. The region spanning 577–656 is the BRCT domain; sequence KSSSVFNNKT…ELLKRLKELD (80 aa).

This sequence belongs to the NAD-dependent DNA ligase family. LigA subfamily. Mg(2+) is required as a cofactor. Mn(2+) serves as cofactor.

It carries out the reaction NAD(+) + (deoxyribonucleotide)n-3'-hydroxyl + 5'-phospho-(deoxyribonucleotide)m = (deoxyribonucleotide)n+m + AMP + beta-nicotinamide D-nucleotide.. In terms of biological role, DNA ligase that catalyzes the formation of phosphodiester linkages between 5'-phosphoryl and 3'-hydroxyl groups in double-stranded DNA using NAD as a coenzyme and as the energy source for the reaction. It is essential for DNA replication and repair of damaged DNA. The sequence is that of DNA ligase from Helicobacter pylori (strain P12).